The primary structure comprises 135 residues: Cytochrome c2 (135 aa).

The signal sequence occupies residues 1–23 (MKKGFLAAGVFAAVAFASGAALA). Residues Cys-37, Cys-40, His-41, and Met-114 each coordinate heme c.

This sequence belongs to the cytochrome c family. Post-translationally, binds 1 heme c group covalently per subunit.

Functionally, cytochrome c2 is found mainly in purple, non-sulfur, photosynthetic bacteria where it functions as the electron donor to the oxidized bacteriochlorophyll in the photophosphorylation pathway. However, it may also have a role in the respiratory chain and is found in some non-photosynthetic bacteria. This is Cytochrome c2 (cycA) from Rhodospirillum rubrum (strain ATCC 11170 / ATH 1.1.1 / DSM 467 / LMG 4362 / NCIMB 8255 / S1).